The chain runs to 450 residues: Probable ECA polymerase (450 aa).

Helical transmembrane passes span 6–26 (FSGL…LTWF), 37–57 (VFFS…TSVL), 63–83 (VGVA…CFYA), 118–138 (VILM…NGFL), 155–175 (GVAL…VYFL), 181–201 (AWLF…MIVG), 207–227 (IIIA…ISLW), 228–248 (MLAA…LKRY), 341–361 (LVVM…GLII), 378–398 (YKAA…IVLA), and 410–430 (VFFI…YWLF).

This sequence belongs to the WzyE family. As to quaternary structure, probably part of a complex composed of WzxE, WzyE and WzzE.

It localises to the cell inner membrane. It functions in the pathway bacterial outer membrane biogenesis; enterobacterial common antigen biosynthesis. Functionally, probably involved in the polymerization of enterobacterial common antigen (ECA) trisaccharide repeat units. This Escherichia coli O17:K52:H18 (strain UMN026 / ExPEC) protein is Probable ECA polymerase.